Consider the following 429-residue polypeptide: Glutamate-1-semialdehyde 2,1-aminomutase 1 (429 aa).

Lys268 is subject to N6-(pyridoxal phosphate)lysine.

Belongs to the class-III pyridoxal-phosphate-dependent aminotransferase family. HemL subfamily. As to quaternary structure, homodimer. Pyridoxal 5'-phosphate is required as a cofactor.

It is found in the cytoplasm. The catalysed reaction is (S)-4-amino-5-oxopentanoate = 5-aminolevulinate. It participates in porphyrin-containing compound metabolism; protoporphyrin-IX biosynthesis; 5-aminolevulinate from L-glutamyl-tRNA(Glu): step 2/2. The chain is Glutamate-1-semialdehyde 2,1-aminomutase 1 from Lysinibacillus sphaericus (strain C3-41).